A 502-amino-acid polypeptide reads, in one-letter code: Glycerol kinase (502 aa).

Thr-14 serves as a coordination point for ADP. 3 residues coordinate ATP: Thr-14, Thr-15, and Ser-16. Residue Thr-14 coordinates sn-glycerol 3-phosphate. Arg-18 is an ADP binding site. Sn-glycerol 3-phosphate is bound by residues Arg-84, Glu-85, Tyr-136, and Asp-246. Glycerol contacts are provided by Arg-84, Glu-85, Tyr-136, Asp-246, and Gln-247. Thr-268 and Gly-311 together coordinate ADP. Positions 268, 311, 315, and 412 each coordinate ATP. ADP-binding residues include Gly-412 and Asn-416.

This sequence belongs to the FGGY kinase family. In terms of assembly, homotetramer and homodimer (in equilibrium). Heterodimer with EIIA-Glc. Binds 1 zinc ion per glycerol kinase EIIA-Glc dimer. The zinc ion is important for dimerization.

It catalyses the reaction glycerol + ATP = sn-glycerol 3-phosphate + ADP + H(+). It participates in polyol metabolism; glycerol degradation via glycerol kinase pathway; sn-glycerol 3-phosphate from glycerol: step 1/1. Activity of this regulatory enzyme is affected by several metabolites. Allosterically and non-competitively inhibited by fructose 1,6-bisphosphate (FBP) and unphosphorylated phosphocarrier protein EIIA-Glc (III-Glc), an integral component of the bacterial phosphotransferase (PTS) system. In terms of biological role, key enzyme in the regulation of glycerol uptake and metabolism. Catalyzes the phosphorylation of glycerol to yield sn-glycerol 3-phosphate. The chain is Glycerol kinase from Citrobacter koseri (strain ATCC BAA-895 / CDC 4225-83 / SGSC4696).